The chain runs to 122 residues: UPF0738 protein YjbL (122 aa).

Belongs to the UPF0738 family.

This is UPF0738 protein YjbL (yjbL) from Bacillus subtilis (strain 168).